The primary structure comprises 20 residues: LPSDATLVLDQTGKELDARL.

It localises to the vacuole. Functionally, inhibitor of serine proteases chymotrypsin, pepsin and trypsin. Has strong antifungal activity against the human pathogenic fungi C.albicans TIMM 1768, S.cerevisiae KCTC 7296 and T.beigelli KCTC 7707, but lacks antifungal activity against the plant pathogenic fungi C.gloeosporioides KACC 40003, C.coccodes KACC 40803 and D.bryoniae KACC 40669. Lacks hemolytic activity against human erythrocytes. The chain is Antifungal protein J from Solanum tuberosum (Potato).